The sequence spans 168 residues: MSVMASDKACAPVRASRPFPKQKLRELVLQALYALEIDPEGEDSLVSLLMTEASVSKKNAAYALMFCRAIRANQPDLDALLDATIRTTTLARLTIIERNILRMMLFEHQQNQDCCPVPVAILIAETTRLIKKFSYSEGSSLILAVLGSIFDHPAPALDAPLEPTSMCG.

It belongs to the NusB family.

Its function is as follows. Involved in transcription antitermination. Required for transcription of ribosomal RNA (rRNA) genes. Binds specifically to the boxA antiterminator sequence of the ribosomal RNA (rrn) operons. In Chlamydia trachomatis serovar A (strain ATCC VR-571B / DSM 19440 / HAR-13), this protein is Transcription antitermination protein NusB.